The following is a 102-amino-acid chain: Cytochrome c-553 (102 aa).

The N-terminal stretch at 1 to 23 is a signal peptide; sequence MKRILVVMSICAALAFGVSAAMA. Positions 33, 36, 37, and 80 each coordinate heme c.

Post-translationally, binds 1 heme c group covalently per subunit.

It is found in the periplasm. In terms of biological role, natural electron acceptor for a formate dehydrogenase. The chain is Cytochrome c-553 from Nitratidesulfovibrio vulgaris (strain DSM 19637 / Miyazaki F) (Desulfovibrio vulgaris).